Reading from the N-terminus, the 274-residue chain is Bis(5'-nucleosyl)-tetraphosphatase, symmetrical (274 aa).

This sequence belongs to the Ap4A hydrolase family.

It catalyses the reaction P(1),P(4)-bis(5'-adenosyl) tetraphosphate + H2O = 2 ADP + 2 H(+). Functionally, hydrolyzes diadenosine 5',5'''-P1,P4-tetraphosphate to yield ADP. This chain is Bis(5'-nucleosyl)-tetraphosphatase, symmetrical, found in Shewanella putrefaciens (strain CN-32 / ATCC BAA-453).